The primary structure comprises 321 residues: Glucokinase (321 aa).

8–13 lines the ATP pocket; it reads GDVGGT.

This sequence belongs to the bacterial glucokinase family.

The protein localises to the cytoplasm. It catalyses the reaction D-glucose + ATP = D-glucose 6-phosphate + ADP + H(+). The protein is Glucokinase of Cronobacter sakazakii (strain ATCC BAA-894) (Enterobacter sakazakii).